The chain runs to 620 residues: Carotenoid isomerooxygenase (620 aa).

3 residues coordinate Fe cation: His211, His267, and His337. A disordered region spans residues 440-459; sequence NGKQATAGEESPKRDAKRGR. The span at 449 to 459 shows a compositional bias: basic and acidic residues; sequence ESPKRDAKRGR. His612 is a binding site for Fe cation.

The protein belongs to the carotenoid oxygenase family. Requires Fe(2+) as cofactor. As to expression, expression follows organogenesis of the larval Bolwig's organ (BO), which mediates larval photophobic behavior. In the adult, expression is restricted exclusively to the brain. Expressed in both neuronal cells and glia cells. Not active within photoreceptors. Active within neuronal cells within the central nervous system.

The catalysed reaction is all-trans-zeaxanthin + O2 = (3R)-11-cis-3-hydroxyretinal + (3R)-all-trans-3-hydroxyretinal. It functions in the pathway cofactor metabolism; retinol metabolism. Catalyzes the oxidative cleavage at the 15,15'-double bond of carotenoids and the simultaneous all-trans to 11-cis isomerization of one cleavage product. Carotenoids like 11-cis retinal can promote visual pigment biogenesis in the dark. Essential for the biosynthesis of the 3-hydroxyretinal chromophore of rhodopsin from zeaxanthin and for proper photoreceptor development. Also essential for larval light perception. This Drosophila melanogaster (Fruit fly) protein is Carotenoid isomerooxygenase (ninaB).